The following is a 105-amino-acid chain: Membrane-stabilizing protein A (105 aa).

A helical transmembrane segment spans residues 1 to 21 (MQFYLILLAILYLIVSFISIF). At 22 to 29 (KMEVVFTR) the chain is on the cytoplasmic side. Residues 30–50 (ILRIIMGVLLLFVLALTTMSF) form a helical membrane-spanning segment. Topologically, residues 51–55 (PKENW) are extracellular. A helical transmembrane segment spans residues 56–76 (WVFIVLLLLVGNVEVTGFKML). Topologically, residues 77–84 (KKDLKGVN) are cytoplasmic. The chain crosses the membrane as a helical span at residues 85–105 (ILNLMSLFIFVIYFILTIVLF).

It belongs to the MspA family.

The protein resides in the membrane. Functionally, plays a role in toxin production, resistance to host innate immune mechanisms, and iron homeostasis. This chain is Membrane-stabilizing protein A, found in Staphylococcus aureus (strain NCTC 8325 / PS 47).